A 527-amino-acid chain; its full sequence is Berberine bridge enzyme-like 5 (527 aa).

The signal sequence occupies residues 1 to 19 (MKALFSVLCLVLLVSILRA). Cysteine 32 and cysteine 95 are disulfide-bonded. Asparagine 35 and asparagine 52 each carry an N-linked (GlcNAc...) asparagine glycan. One can recognise an FAD-binding PCMH-type domain in the interval 73–247 (NYQKLVAIVA…LSWKINLVEV (175 aa)). The 6-(S-cysteinyl)-8alpha-(pros-histidyl)-FAD (His-Cys) cross-link spans 110 to 172 (HDYEGLSYTS…QTLAFPAGVC (63 aa)). Residue asparagine 341 is glycosylated (N-linked (GlcNAc...) asparagine).

The protein belongs to the oxygen-dependent FAD-linked oxidoreductase family. FAD serves as cofactor. In terms of processing, the FAD cofactor is bound via a bicovalent 6-S-cysteinyl, 8alpha-N1-histidyl FAD linkage.

It localises to the secreted. The protein resides in the cell wall. In terms of biological role, probable flavin-dependent oxidoreductase. In Arabidopsis thaliana (Mouse-ear cress), this protein is Berberine bridge enzyme-like 5.